The following is a 331-amino-acid chain: Ketol-acid reductoisomerase (NADP(+)) (331 aa).

A KARI N-terminal Rossmann domain is found at alanine 2–threonine 182. NADP(+) contacts are provided by residues tyrosine 25 to glutamine 28, serine 51, serine 53, and aspartate 83 to glutamine 86. Histidine 108 is an active-site residue. Glycine 134 is a binding site for NADP(+). Residues asparagine 183–leucine 328 form the KARI C-terminal knotted domain. Positions 191, 195, 227, and 231 each coordinate Mg(2+). A substrate-binding site is contributed by serine 252.

This sequence belongs to the ketol-acid reductoisomerase family. The cofactor is Mg(2+).

It catalyses the reaction (2R)-2,3-dihydroxy-3-methylbutanoate + NADP(+) = (2S)-2-acetolactate + NADPH + H(+). It carries out the reaction (2R,3R)-2,3-dihydroxy-3-methylpentanoate + NADP(+) = (S)-2-ethyl-2-hydroxy-3-oxobutanoate + NADPH + H(+). The protein operates within amino-acid biosynthesis; L-isoleucine biosynthesis; L-isoleucine from 2-oxobutanoate: step 2/4. Its pathway is amino-acid biosynthesis; L-valine biosynthesis; L-valine from pyruvate: step 2/4. Involved in the biosynthesis of branched-chain amino acids (BCAA). Catalyzes an alkyl-migration followed by a ketol-acid reduction of (S)-2-acetolactate (S2AL) to yield (R)-2,3-dihydroxy-isovalerate. In the isomerase reaction, S2AL is rearranged via a Mg-dependent methyl migration to produce 3-hydroxy-3-methyl-2-ketobutyrate (HMKB). In the reductase reaction, this 2-ketoacid undergoes a metal-dependent reduction by NADPH to yield (R)-2,3-dihydroxy-isovalerate. The sequence is that of Ketol-acid reductoisomerase (NADP(+)) from Prochlorococcus marinus (strain MIT 9303).